Here is a 494-residue protein sequence, read N- to C-terminus: UDP-N-acetylmuramoyl-L-alanyl-D-glutamate--2,6-diaminopimelate ligase (494 aa).

S32 provides a ligand contact to UDP-N-acetyl-alpha-D-muramoyl-L-alanyl-D-glutamate. 112–118 (GTNGKTT) provides a ligand contact to ATP. Residues N153, 154–155 (TT), S181, and R189 each bind UDP-N-acetyl-alpha-D-muramoyl-L-alanyl-D-glutamate. An N6-carboxylysine modification is found at K221. Residues R383, 407-410 (DNPR), G459, and E463 each bind meso-2,6-diaminopimelate. The Meso-diaminopimelate recognition motif signature appears at 407 to 410 (DNPR).

The protein belongs to the MurCDEF family. MurE subfamily. Mg(2+) is required as a cofactor. Carboxylation is probably crucial for Mg(2+) binding and, consequently, for the gamma-phosphate positioning of ATP.

It is found in the cytoplasm. It carries out the reaction UDP-N-acetyl-alpha-D-muramoyl-L-alanyl-D-glutamate + meso-2,6-diaminopimelate + ATP = UDP-N-acetyl-alpha-D-muramoyl-L-alanyl-gamma-D-glutamyl-meso-2,6-diaminopimelate + ADP + phosphate + H(+). Its pathway is cell wall biogenesis; peptidoglycan biosynthesis. In terms of biological role, catalyzes the addition of meso-diaminopimelic acid to the nucleotide precursor UDP-N-acetylmuramoyl-L-alanyl-D-glutamate (UMAG) in the biosynthesis of bacterial cell-wall peptidoglycan. In Solibacter usitatus (strain Ellin6076), this protein is UDP-N-acetylmuramoyl-L-alanyl-D-glutamate--2,6-diaminopimelate ligase.